The primary structure comprises 65 residues: Large ribosomal subunit protein bL35 (65 aa).

Composition is skewed to basic residues over residues 1-11 and 21-43; these read MPKIKTRRSAA and KFKR…RKMR. Positions 1-65 are disordered; sequence MPKIKTRRSA…KAVRRMLPNG (65 aa).

Belongs to the bacterial ribosomal protein bL35 family.

The sequence is that of Large ribosomal subunit protein bL35 from Desulfovibrio desulfuricans (strain ATCC 27774 / DSM 6949 / MB).